Consider the following 249-residue polypeptide: V-type proton ATPase subunit D 2 (249 aa).

Belongs to the V-ATPase D subunit family. In terms of assembly, V-ATPase is a heteromultimeric enzyme made up of two complexes: the ATP-hydrolytic V1 complex and the proton translocation V0 complex. The V1 complex consists of three catalytic AB heterodimers that form a heterohexamer, three peripheral stalks each consisting of EG heterodimers, one central rotor including subunits D and F, and the regulatory subunits C and H. The proton translocation complex V0 consists of the proton transport subunit a, a ring of proteolipid subunits c9c'', rotary subunit d, subunits e and f, and the accessory subunits VhaAC45 and ATP6AP2.

Functionally, subunit of the V1 complex of vacuolar(H+)-ATPase (V-ATPase), a multisubunit enzyme composed of a peripheral complex (V1) that hydrolyzes ATP and a membrane integral complex (V0) that translocates protons. V-ATPase is responsible for acidifying and maintaining the pH of intracellular compartments and in some cell types, is targeted to the plasma membrane, where it is responsible for acidifying the extracellular environment. This Drosophila melanogaster (Fruit fly) protein is V-type proton ATPase subunit D 2 (Vha36-3).